The sequence spans 717 residues: DNA-directed RNA polymerase subunit beta' (717 aa).

Zn(2+)-binding residues include Cys71, Cys73, Cys91, and Cys94. Mg(2+) contacts are provided by Asp481, Asp483, and Asp485.

Belongs to the RNA polymerase beta' chain family. RpoC1 subfamily. In terms of assembly, in plastids the minimal PEP RNA polymerase catalytic core is composed of four subunits: alpha, beta, beta', and beta''. When a (nuclear-encoded) sigma factor is associated with the core the holoenzyme is formed, which can initiate transcription. The cofactor is Mg(2+). Zn(2+) is required as a cofactor.

It is found in the plastid. Its subcellular location is the chloroplast. The catalysed reaction is RNA(n) + a ribonucleoside 5'-triphosphate = RNA(n+1) + diphosphate. Functionally, DNA-dependent RNA polymerase catalyzes the transcription of DNA into RNA using the four ribonucleoside triphosphates as substrates. This is DNA-directed RNA polymerase subunit beta' from Chlorokybus atmophyticus (Soil alga).